The sequence spans 280 residues: Probable protein VP2 (280 aa).

Disordered stretches follow at residues 46–167 and 200–280; these read LGAG…FFTS and AQLS…TYSN. The segment covering 65–81 has biased composition (pro residues); that stretch reads PEGPGGPPQHAPPNPPP. Residues 90–100 are compositionally biased toward gly residues; that stretch reads RGGGAGGAGDG. Residues 106–117 show a composition bias toward acidic residues; that stretch reads DAAEEYGPEDLD. Over residues 227-251 the composition is skewed to basic residues; it reads AKTRRRVKKKPLSSKNKHTKKKKRS. The span at 252 to 266 shows a compositional bias: low complexity; the sequence is YSSSSPSSKDNTSES.

In terms of processing, phosphorylated at C-terminal serines.

This chain is Probable protein VP2, found in Homo sapiens (Human).